The primary structure comprises 246 residues: Exosome complex component Rrp41 (246 aa).

It belongs to the RNase PH family. Rrp41 subfamily. Component of the archaeal exosome complex. Forms a hexameric ring-like arrangement composed of 3 Rrp41-Rrp42 heterodimers. The hexameric ring associates with a trimer of Rrp4 and/or Csl4 subunits.

It is found in the cytoplasm. In terms of biological role, catalytic component of the exosome, which is a complex involved in RNA degradation. Has 3'-&gt;5' exoribonuclease activity. Can also synthesize heteromeric RNA-tails. This Aeropyrum pernix (strain ATCC 700893 / DSM 11879 / JCM 9820 / NBRC 100138 / K1) protein is Exosome complex component Rrp41.